Here is a 127-residue protein sequence, read N- to C-terminus: Putative lipoprotein LprJ (127 aa).

The signal sequence occupies residues 1-34 (MTAHTHDGTRTWRTGRQATTLLALLAGVFGGAAS). The N-palmitoyl cysteine moiety is linked to residue Cys-35. A lipid anchor (S-diacylglycerol cysteine) is attached at Cys-35. Residues 35–99 (CAAPIQADMM…MAEINGMSRD (65 aa)) are Extracellular-facing. A helical membrane pass occupies residues 100 to 120 (MASTFTIVAIGTYCPAVIAPL). Topologically, residues 121–127 (MPNRLQA) are cytoplasmic.

As to quaternary structure, may interact with sensor protein KdpD. Modified by Lgt on Cys-35 with an S-linked diacylglycerol, signal peptide is removed by LspA, modified by Lnt with amide-linked fatty acid.

It localises to the cell membrane. Overexpression induces expression of sensor protein kdpD gene at low K(+) concentrations (0 and 250 uM, tested in M.smegatis). This is Putative lipoprotein LprJ (lprJ) from Mycobacterium tuberculosis (strain ATCC 25618 / H37Rv).